Reading from the N-terminus, the 142-residue chain is Neuritin (142 aa).

A signal peptide spans 1–27 (MGLKLNGRYISLILAVQIAYLVQAVRA). A lipid anchor (GPI-anchor amidated glycine) is attached at Gly-116. Positions 117 to 142 (AAGSLLPALSVLLVSLSAALATWFSF) are cleaved as a propeptide — removed in mature form.

It belongs to the neuritin family. Component of the outer core of AMPAR complex. AMPAR complex consists of an inner core made of 4 pore-forming GluA/GRIA proteins (GRIA1, GRIA2, GRIA3 and GRIA4) and 4 major auxiliary subunits arranged in a twofold symmetry. One of the two pairs of distinct binding sites is occupied either by CNIH2, CNIH3 or CACNG2, CACNG3. The other harbors CACNG2, CACNG3, CACNG4, CACNG8 or GSG1L. This inner core of AMPAR complex is complemented by outer core constituents binding directly to the GluA/GRIA proteins at sites distinct from the interaction sites of the inner core constituents. Outer core constituents include at least PRRT1, PRRT2, CKAMP44/SHISA9, FRRS1L and NRN1. The proteins of the inner and outer core serve as a platform for other, more peripherally associated AMPAR constituents. Alone or in combination, these auxiliary subunits control the gating and pharmacology of the AMPAR complex and profoundly impact their biogenesis and protein processing. In terms of tissue distribution, expressed in the brain (at protein level).

It localises to the cell membrane. It is found in the synapse. Its function is as follows. Promotes neurite outgrowth and especially branching of neuritic processes in primary hippocampal and cortical cells. In Mus musculus (Mouse), this protein is Neuritin (Nrn1).